A 638-amino-acid chain; its full sequence is Cytoplasmic dynein 1 intermediate chain 2 (638 aa).

Basic and acidic residues-rich tracts occupy residues 1-13 (MSDK…ELER) and 20-43 (QIRE…KKEA). Disordered stretches follow at residues 1-135 (MSDK…GRGP) and 154-209 (VTYT…HELT). N-acetylserine is present on serine 2. The residue at position 51 (serine 51) is a Diphosphoserine. Phosphoserine occurs at positions 51 and 90. The segment covering 88 to 97 (PSSKSVSTPS) has biased composition (low complexity). Threonine 95 is modified (phosphothreonine). Serine 97, serine 101, and serine 104 each carry phosphoserine. Positions 133-165 (RGPIKLGMAKITQVDFPPREIVTYTKETQTPVT) are interaction with DYNLT1. Residues 190-209 (EKILKKDEENDSKAPPHELT) show a composition bias toward basic and acidic residues. 6 WD repeats span residues 277-326 (SKHR…TTPE), 330-370 (HCQS…RTPV), 379-420 (AHTH…HPQD), 429-469 (SKAV…AGIS), 474-519 (GHQG…PLYS), and 568-607 (EGNP…AVPR).

Belongs to the dynein intermediate chain family. Homodimer. The cytoplasmic dynein 1 complex consists of two catalytic heavy chains (HCs) and a number of non-catalytic subunits presented by intermediate chains (ICs), light intermediate chains (LICs) and light chains (LCs); the composition seems to vary in respect to the IC, LIC and LC composition. The heavy chain homodimer serves as a scaffold for the probable homodimeric assembly of the respective non-catalytic subunits. The ICs and LICs bind directly to the HC dimer and the LCs assemble on the IC dimer. Interacts with DYNLT3. Interacts with DYNLT1. Interacts (dephosphorylated at Ser-90) with DCTN1. Interacts with BICD2. Interacts with SPEF2. Interacts with CFAP61. In terms of processing, the phosphorylation status of Ser-90 appears to be involved in dynactin-dependent target binding. Pyrophosphorylation by 5-diphosphoinositol pentakisphosphate (5-IP7) promotes interaction with DCTN1. Serine pyrophosphorylation is achieved by Mg(2+)-dependent, but enzyme independent transfer of a beta-phosphate from a inositol pyrophosphate to a pre-phosphorylated serine residue. As to expression, skeletal muscle, testis, kidney, brain, heart and spleen.

It is found in the cytoplasm. The protein localises to the cytoskeleton. In terms of biological role, acts as one of several non-catalytic accessory components of the cytoplasmic dynein 1 complex that are thought to be involved in linking dynein to cargos and to adapter proteins that regulate dynein function. Cytoplasmic dynein 1 acts as a motor for the intracellular retrograde motility of vesicles and organelles along microtubules. The intermediate chains mediate the binding of dynein to dynactin via its 150 kDa component (p150-glued) DCTN1. Involved in membrane-transport, such as Golgi apparatus, late endosomes and lysosomes. In Rattus norvegicus (Rat), this protein is Cytoplasmic dynein 1 intermediate chain 2 (Dync1i2).